Reading from the N-terminus, the 355-residue chain is Methylthioribose-1-phosphate isomerase (355 aa).

Substrate-binding positions include 47 to 49, R91, and Q199; that span reads RGA. The Proton donor role is filled by D240. 250–251 provides a ligand contact to substrate; sequence NK.

It belongs to the eIF-2B alpha/beta/delta subunits family. MtnA subfamily.

The catalysed reaction is 5-(methylsulfanyl)-alpha-D-ribose 1-phosphate = 5-(methylsulfanyl)-D-ribulose 1-phosphate. It functions in the pathway amino-acid biosynthesis; L-methionine biosynthesis via salvage pathway; L-methionine from S-methyl-5-thio-alpha-D-ribose 1-phosphate: step 1/6. Its function is as follows. Catalyzes the interconversion of methylthioribose-1-phosphate (MTR-1-P) into methylthioribulose-1-phosphate (MTRu-1-P). This is Methylthioribose-1-phosphate isomerase from Oleidesulfovibrio alaskensis (strain ATCC BAA-1058 / DSM 17464 / G20) (Desulfovibrio alaskensis).